Reading from the N-terminus, the 948-residue chain is Probable DNA-directed RNA polymerase (948 aa).

Catalysis depends on residues aspartate 600, lysine 680, and aspartate 853.

This sequence belongs to the phage and mitochondrial RNA polymerase family.

The protein resides in the mitochondrion. It carries out the reaction RNA(n) + a ribonucleoside 5'-triphosphate = RNA(n+1) + diphosphate. In terms of biological role, DNA-dependent RNA polymerase catalyzes the transcription of DNA into RNA using the four ribonucleoside triphosphates as substrates. In Podospora anserina (Pleurage anserina), this protein is Probable DNA-directed RNA polymerase.